The chain runs to 63 residues: UPF0512 protein X (63 aa).

Belongs to the UPF0512 family.

The chain is UPF0512 protein X from Dictyostelium discoideum (Social amoeba).